We begin with the raw amino-acid sequence, 153 residues long: MADAARAARLADRIKVIVAQALERRVKDPRLGFVTVTDARVTNDLQHATLYYTVYGDEEQRADTARALESAKGVLRAEVGKNITARLTPTLTFVADEIPADAARLEELLRTAREKDAQVAEQAQGAQYAAGEDAYRTPSDEDDAEGPESAPRV.

A disordered region spans residues 116–153 (DAQVAEQAQGAQYAAGEDAYRTPSDEDDAEGPESAPRV). Over residues 119–132 (VAEQAQGAQYAAGE) the composition is skewed to low complexity.

It belongs to the RbfA family. As to quaternary structure, monomer. Binds 30S ribosomal subunits, but not 50S ribosomal subunits or 70S ribosomes.

The protein resides in the cytoplasm. Its function is as follows. One of several proteins that assist in the late maturation steps of the functional core of the 30S ribosomal subunit. Associates with free 30S ribosomal subunits (but not with 30S subunits that are part of 70S ribosomes or polysomes). Required for efficient processing of 16S rRNA. May interact with the 5'-terminal helix region of 16S rRNA. The chain is Ribosome-binding factor A from Kocuria rhizophila (strain ATCC 9341 / DSM 348 / NBRC 103217 / DC2201).